A 530-amino-acid polypeptide reads, in one-letter code: Ubiquitin carboxyl-terminal hydrolase 17-like protein 13 (530 aa).

The USP domain occupies 80–375 (AGLQNMGNTC…QAYVLFYIQK (296 aa)). The Nucleophile role is filled by Cys89. Residue His334 is the Proton acceptor of the active site. Basic and acidic residues-rich tracts occupy residues 382–392 (SESVSRGREPR) and 398–412 (DTDR…KRDH). Disordered regions lie at residues 382-412 (SESV…KRDH) and 477-530 (NHHP…LVCQ). The segment covering 493 to 505 (TPTHQESMNTGTL) has biased composition (polar residues). A compositionally biased stretch (basic residues) spans 510–524 (GRARRSKGKNKHSKR).

This sequence belongs to the peptidase C19 family. USP17 subfamily.

The protein localises to the nucleus. It localises to the endoplasmic reticulum. It carries out the reaction Thiol-dependent hydrolysis of ester, thioester, amide, peptide and isopeptide bonds formed by the C-terminal Gly of ubiquitin (a 76-residue protein attached to proteins as an intracellular targeting signal).. Its function is as follows. Deubiquitinating enzyme that removes conjugated ubiquitin from specific proteins to regulate different cellular processes that may include cell proliferation, progression through the cell cycle, apoptosis, cell migration, and the cellular response to viral infection. The protein is Ubiquitin carboxyl-terminal hydrolase 17-like protein 13 (USP17L13) of Homo sapiens (Human).